Here is a 316-residue protein sequence, read N- to C-terminus: 4-hydroxy-3-methylbut-2-enyl diphosphate reductase (316 aa).

Position 12 (cysteine 12) interacts with [4Fe-4S] cluster. Positions 41 and 74 each coordinate (2E)-4-hydroxy-3-methylbut-2-enyl diphosphate. The dimethylallyl diphosphate site is built by histidine 41 and histidine 74. Residues histidine 41 and histidine 74 each coordinate isopentenyl diphosphate. Position 96 (cysteine 96) interacts with [4Fe-4S] cluster. A (2E)-4-hydroxy-3-methylbut-2-enyl diphosphate-binding site is contributed by histidine 124. Residue histidine 124 participates in dimethylallyl diphosphate binding. Position 124 (histidine 124) interacts with isopentenyl diphosphate. Residue glutamate 126 is the Proton donor of the active site. A (2E)-4-hydroxy-3-methylbut-2-enyl diphosphate-binding site is contributed by threonine 169. [4Fe-4S] cluster is bound at residue cysteine 199. Residues serine 227, serine 228, asparagine 229, and serine 271 each contribute to the (2E)-4-hydroxy-3-methylbut-2-enyl diphosphate site. Serine 227, serine 228, asparagine 229, and serine 271 together coordinate dimethylallyl diphosphate. The isopentenyl diphosphate site is built by serine 227, serine 228, asparagine 229, and serine 271.

The protein belongs to the IspH family. [4Fe-4S] cluster serves as cofactor.

It catalyses the reaction isopentenyl diphosphate + 2 oxidized [2Fe-2S]-[ferredoxin] + H2O = (2E)-4-hydroxy-3-methylbut-2-enyl diphosphate + 2 reduced [2Fe-2S]-[ferredoxin] + 2 H(+). The enzyme catalyses dimethylallyl diphosphate + 2 oxidized [2Fe-2S]-[ferredoxin] + H2O = (2E)-4-hydroxy-3-methylbut-2-enyl diphosphate + 2 reduced [2Fe-2S]-[ferredoxin] + 2 H(+). It functions in the pathway isoprenoid biosynthesis; dimethylallyl diphosphate biosynthesis; dimethylallyl diphosphate from (2E)-4-hydroxy-3-methylbutenyl diphosphate: step 1/1. Its pathway is isoprenoid biosynthesis; isopentenyl diphosphate biosynthesis via DXP pathway; isopentenyl diphosphate from 1-deoxy-D-xylulose 5-phosphate: step 6/6. Catalyzes the conversion of 1-hydroxy-2-methyl-2-(E)-butenyl 4-diphosphate (HMBPP) into a mixture of isopentenyl diphosphate (IPP) and dimethylallyl diphosphate (DMAPP). Acts in the terminal step of the DOXP/MEP pathway for isoprenoid precursor biosynthesis. This chain is 4-hydroxy-3-methylbut-2-enyl diphosphate reductase, found in Stenotrophomonas maltophilia (strain K279a).